The sequence spans 471 residues: POU domain protein 2 (471 aa).

A compositionally biased stretch (acidic residues) spans 1–18 (CGKSYEEEEEEEDDELEA). 2 disordered regions span residues 1-32 (CGKS…SARQ) and 149-238 (DQQL…PKPL). Over residues 165–180 (STPLSKSPLRSPSLSP) the composition is skewed to low complexity. Residues 186-196 (EPQQAQRTPPN) show a composition bias toward polar residues. A compositionally biased stretch (low complexity) spans 197-230 (SLAAAGLGLSSAVLTPNTPSMQQQQQQTMTSTTN). The POU-specific domain maps to 257–331 (EETTDLEELE…LLQKWLEDAD (75 aa)). Residues 362-421 (RRKKRTSIETTIRGALEQAFVLNCKPTSEEINQLSERLHMDKEVVRVWFCNRRQKEKRIN) constitute a DNA-binding region (homeobox).

This sequence belongs to the POU transcription factor family. Class-2 subfamily.

Its subcellular location is the nucleus. DNA-binding regulatory protein implicated in early development. Involved in neuronal cell fate decision. May act as an octamer-dependent activator of transcription. This chain is POU domain protein 2 (pdm2), found in Drosophila virilis (Fruit fly).